Consider the following 313-residue polypeptide: Dimethyladenosine transferase (313 aa).

Residues M1–E21 are disordered. Residues H37, L39, G64, E85, D113, and N128 each contribute to the S-adenosyl-L-methionine site.

Belongs to the class I-like SAM-binding methyltransferase superfamily. rRNA adenine N(6)-methyltransferase family. As to quaternary structure, part of the small subunit (SSU) processome, composed of more than 70 proteins and the RNA chaperone small nucleolar RNA (snoRNA) U3.

It localises to the nucleus. Its subcellular location is the nucleoplasm. The protein localises to the nucleolus. The catalysed reaction is adenosine(1779)/adenosine(1780) in 18S rRNA + 4 S-adenosyl-L-methionine = N(6)-dimethyladenosine(1779)/N(6)-dimethyladenosine(1780) in 18S rRNA + 4 S-adenosyl-L-homocysteine + 4 H(+). Functionally, specifically dimethylates two adjacent adenosines in the loop of a conserved hairpin near the 3'-end of 18S rRNA in the 40S particle. Involved in the pre-rRNA processing steps leading to small-subunit rRNA production independently of its RNA-modifying catalytic activity. Part of the small subunit (SSU) processome, first precursor of the small eukaryotic ribosomal subunit. During the assembly of the SSU processome in the nucleolus, many ribosome biogenesis factors, an RNA chaperone and ribosomal proteins associate with the nascent pre-rRNA and work in concert to generate RNA folding, modifications, rearrangements and cleavage as well as targeted degradation of pre-ribosomal RNA by the RNA exosome. In Macaca fascicularis (Crab-eating macaque), this protein is Dimethyladenosine transferase (DIMT1).